We begin with the raw amino-acid sequence, 143 residues long: Nucleoside diphosphate kinase 2 (143 aa).

ATP-binding residues include lysine 11, phenylalanine 59, arginine 87, threonine 93, arginine 104, and asparagine 114. Catalysis depends on histidine 117, which acts as the Pros-phosphohistidine intermediate.

This sequence belongs to the NDK family. As to quaternary structure, homotetramer. Mg(2+) serves as cofactor.

The protein localises to the cytoplasm. It carries out the reaction a 2'-deoxyribonucleoside 5'-diphosphate + ATP = a 2'-deoxyribonucleoside 5'-triphosphate + ADP. The enzyme catalyses a ribonucleoside 5'-diphosphate + ATP = a ribonucleoside 5'-triphosphate + ADP. Major role in the synthesis of nucleoside triphosphates other than ATP. The ATP gamma phosphate is transferred to the NDP beta phosphate via a ping-pong mechanism, using a phosphorylated active-site intermediate. The chain is Nucleoside diphosphate kinase 2 from Protochlamydia amoebophila (strain UWE25).